Reading from the N-terminus, the 304-residue chain is Germ cell-specific gene 1-like protein (304 aa).

Residues 1–8 are Cytoplasmic-facing; that stretch reads MKTTRKCR. Residues 9–29 form a helical membrane-spanning segment; that stretch reads ALLSVGLNLLALLFSTTAFIT. At 30–112 the chain is on the extracellular side; it reads TYWCEGTQRV…FIDLAPASER (83 aa). A helical membrane pass occupies residues 113 to 133; the sequence is GVLWLSVVSEVLYIMLLVVGF. At 134–153 the chain is on the cytoplasmic side; sequence SLMCLELFHSSNVIDGLKLN. Residues 154–174 form a helical membrane-spanning segment; the sequence is AFAAVFTVLSGLLGMVAHMMY. The Extracellular portion of the chain corresponds to 175–197; that stretch reads TQVFQITVSLGPEDWRPHTWDYG. A helical membrane pass occupies residues 198–218; sequence WSFCMAWGSFTCCMAASVTTL. The Cytoplasmic portion of the chain corresponds to 219–304; sequence NSYTKTVIEF…NTESLGEEQC (86 aa). The span at 266-278 shows a compositional bias: polar residues; it reads VDVYPSHGSSHGN. The interval 266–304 is disordered; it reads VDVYPSHGSSHGNSRGKMRSPPAPVDQGDNTESLGEEQC.

This sequence belongs to the GSG1 family. In terms of assembly, component of the AMPAR complex.

It is found in the cell membrane. The protein localises to the synapse. Functionally, as a component of the AMPAR complex, modifies AMPA receptor (AMPAR) gating. This chain is Germ cell-specific gene 1-like protein (gsg1l), found in Danio rerio (Zebrafish).